The chain runs to 71 residues: Large ribosomal subunit protein uL29 (71 aa).

Positions 32-51 (GVNKSTGGAPSNPGKISETK) are disordered.

This sequence belongs to the universal ribosomal protein uL29 family.

The protein is Large ribosomal subunit protein uL29 of Methanococcus maripaludis (strain DSM 14266 / JCM 13030 / NBRC 101832 / S2 / LL).